The chain runs to 242 residues: Probable porphobilinogen deaminase (242 aa).

Belongs to the HMBS family.

The catalysed reaction is 4 porphobilinogen + H2O = hydroxymethylbilane + 4 NH4(+). It functions in the pathway porphyrin-containing compound metabolism; protoporphyrin-IX biosynthesis; coproporphyrinogen-III from 5-aminolevulinate: step 2/4. Functionally, tetrapolymerization of the monopyrrole PBG into the hydroxymethylbilane pre-uroporphyrinogen in several discrete steps. The sequence is that of Probable porphobilinogen deaminase (hemC) from Chlamydia muridarum (strain MoPn / Nigg).